Reading from the N-terminus, the 89-residue chain is Small ribosomal subunit protein uS15 (89 aa).

The protein belongs to the universal ribosomal protein uS15 family. Part of the 30S ribosomal subunit. Forms a bridge to the 50S subunit in the 70S ribosome, contacting the 23S rRNA.

One of the primary rRNA binding proteins, it binds directly to 16S rRNA where it helps nucleate assembly of the platform of the 30S subunit by binding and bridging several RNA helices of the 16S rRNA. Its function is as follows. Forms an intersubunit bridge (bridge B4) with the 23S rRNA of the 50S subunit in the ribosome. This Polynucleobacter asymbioticus (strain DSM 18221 / CIP 109841 / QLW-P1DMWA-1) (Polynucleobacter necessarius subsp. asymbioticus) protein is Small ribosomal subunit protein uS15.